The chain runs to 353 residues: Immune-associated nucleotide-binding protein 8 (353 aa).

Residues 1-10 are compositionally biased toward polar residues; that stretch reads MANDQKNSES. The interval 1 to 43 is disordered; the sequence is MANDQKNSESFPAKEDHKKDDAAAPAEVDHKDEFSASQPHPVE. Basic and acidic residues predominate over residues 12 to 34; that stretch reads PAKEDHKKDDAAAPAEVDHKDEF. The AIG1-type G domain maps to 40–248; that stretch reads HPVENIVLVG…YTDEMYHMIK (209 aa). The G1 stretch occupies residues 49–56; the sequence is GRTGNGKS. Residues 49-57 and Ser70 each bind GTP; that span reads GRTGNGKSA. Residues 76 to 80 are G2; the sequence is GVTME. Residues 98–101 form a G3 region; it reads DTPG. A G4 region spans residues 168–171; the sequence is TGGD. The tract at residues 207-209 is G5; the sequence is DNK. Asn208 is a binding site for GTP. Positions 244-291 form a coiled coil; sequence YHMIKEENERHKKEQEELESKGHSEEQLAALMKELQIMNERNLKAMAE.

The protein belongs to the TRAFAC class TrmE-Era-EngA-EngB-Septin-like GTPase superfamily. AIG1/Toc34/Toc159-like paraseptin GTPase family. IAN subfamily. Mainly expressed in leaves.

The chain is Immune-associated nucleotide-binding protein 8 from Arabidopsis thaliana (Mouse-ear cress).